A 554-amino-acid chain; its full sequence is Solute carrier family 22 member 2 (554 aa).

The Cytoplasmic segment spans residues 1–21 (MPTVDDILEQVGHFHFFQKQT). The helical transmembrane segment at 22–42 (FFLLALISAAFTPIYVGIVFL) threads the bilayer. At 43-149 (GFTPDHRCRS…LVCARSWMLD (107 aa)) the chain is on the extracellular side. Residue Asn-71 is glycosylated (N-linked (GlcNAc...) asparagine). Residues 150-170 (LFQSAVNIGFFIGSVGIGYLA) form a helical membrane-spanning segment. Residues 171-176 (DRFGRK) lie on the Cytoplasmic side of the membrane. The chain crosses the membrane as a helical span at residues 177-197 (LCLLVTILINAAAGVLMAVSP). The N-linked (GlcNAc...) asparagine glycan is linked to Asn-198. Topologically, residues 198 to 209 (NYTWMLIFRLIQ) are extracellular. The helical transmembrane segment at 210 to 230 (GLVSKAGWLIGYILITEFVGL) threads the bilayer. Topologically, residues 231-237 (NYRRTVG) are cytoplasmic. Residues 238–258 (ILYQVAFTVGLLVLAGVAYAL) form a helical membrane-spanning segment. Residues 259–262 (PRWR) lie on the Extracellular side of the membrane. The helical transmembrane segment at 263–283 (WLQLTVTLPYFCFLLYYWCIP) threads the bilayer. Residues 283-287 (PESPR) carry the Proline-rich sequence motif. Residues 284-348 (ESPRWLISQN…RTPQIRKHTC (65 aa)) lie on the Cytoplasmic side of the membrane. A helical transmembrane segment spans residues 349-369 (ILMYNWFTSSVLYQGLIMHLG). Over 370-374 (LAGGD) the chain is Extracellular. A helical membrane pass occupies residues 375–395 (IYLDFFYSALVEFPAAFLIIA). Topologically, residues 396–403 (TIDRVGRR) are cytoplasmic. Residues 404-424 (YPWAVSNMVAGAACLASVFVP) traverse the membrane as a helical segment. Residues 425–427 (DDL) lie on the Extracellular side of the membrane. The chain crosses the membrane as a helical span at residues 428–450 (QGLRITVACLGRMGITMAYEMVC). Topologically, residues 451–463 (LVNAELYPTFIRN) are cytoplasmic. The chain crosses the membrane as a helical span at residues 464–484 (LGVLVCSSLCDVGGIVTPFLV). The Extracellular portion of the chain corresponds to 485-493 (YRLTAIWLQ). The helical transmembrane segment at 494 to 514 (LPLVVFAVVGLVAGGLVLMLP) threads the bilayer. Residues 515–554 (ETKGRTLPETIEEAENLQRPRKNREKVIYVHVRKADGPLT) are Cytoplasmic-facing.

Belongs to the major facilitator (TC 2.A.1) superfamily. Organic cation transporter (TC 2.A.1.19) family. In terms of processing, tyrosine phosphorylated. As to expression, expressed in kidney.

It is found in the basolateral cell membrane. Its subcellular location is the basal cell membrane. It carries out the reaction (R)-noradrenaline(out) = (R)-noradrenaline(in). The enzyme catalyses (R)-adrenaline(out) = (R)-adrenaline(in). The catalysed reaction is serotonin(out) = serotonin(in). It catalyses the reaction dopamine(out) = dopamine(in). It carries out the reaction histamine(out) = histamine(in). The enzyme catalyses thiamine(in) = thiamine(out). The catalysed reaction is creatinine(in) = creatinine(out). It catalyses the reaction 1-methylnicotinamide(out) = 1-methylnicotinamide(in). It carries out the reaction guanidine(out) = guanidine(in). The enzyme catalyses choline(out) = choline(in). The catalysed reaction is agmatine(out) = agmatine(in). It catalyses the reaction putrescine(out) = putrescine(in). It carries out the reaction spermidine(in) = spermidine(out). The enzyme catalyses tyramine(in) = tyramine(out). The catalysed reaction is L-histidyl-L-proline diketopiperazine(in) = L-histidyl-L-proline diketopiperazine(out). It catalyses the reaction (R)-salsolinol(in) = (R)-salsolinol(out). It carries out the reaction N-methyl-(R)-salsolinol(in) = N-methyl-(R)-salsolinol(out). The enzyme catalyses acetylcholine(in) = acetylcholine(out). The catalysed reaction is prostaglandin F2alpha(out) = prostaglandin F2alpha(in). It catalyses the reaction prostaglandin E2(out) = prostaglandin E2(in). Its activity is regulated as follows. Tyrosine phosphorylation of the transporter leads to activation of the transport activity. Inhibited by cGMP, most likely through a cGMP-binding protein that interacts with OCT2. Its function is as follows. Electrogenic voltage-dependent transporter that mediates the transport of a variety of organic cations such as endogenous bioactive amines, cationic drugs and xenobiotics. Functions as a Na(+)-independent, bidirectional uniporter. Cation cellular uptake or release is driven by the electrochemical potential, i.e. membrane potential and concentration gradient. However, may also engage electroneutral cation exchange when saturating concentrations of cation substrates are reached. Predominantly expressed at the basolateral membrane of hepatocytes and proximal tubules and involved in the uptake and disposition of cationic compounds by hepatic and renal clearance from the blood flow. Implicated in monoamine neurotransmitters uptake such as histamine, dopamine, adrenaline/epinephrine, noradrenaline/norepinephrine, serotonin and tyramine, thereby supporting a physiological role in the central nervous system by regulating interstitial concentrations of neurotransmitters. Also capable of transporting dopaminergic neuromodulators cyclo(his-pro), salsolinol and N-methyl-salsolinol, thereby involved in the maintenance of dopaminergic cell integrity in the central nervous system. Mediates the bidirectional transport of acetylcholine (ACh) at the apical membrane of ciliated cell in airway epithelium, thereby playing a role in luminal release of ACh from bronchial epithelium. Also transports guanidine and endogenous monoamines such as vitamin B1/thiamine, creatinine and N-1-methylnicotinamide (NMN). Mediates the uptake and efflux of quaternary ammonium compound choline. Mediates the bidirectional transport of polyamine agmatine and the uptake of polyamines putrescine and spermidine. Able to transport non-amine endogenous compounds such as prostaglandin E2 (PGE2) and prostaglandin F2-alpha (PGF2-alpha). Also involved in the uptake of xenobiotic 4-(4-(dimethylamino)styryl)-N-methylpyridinium (ASP). May contribute to regulate the transport of organic compounds in testis across the blood-testis-barrier. The protein is Solute carrier family 22 member 2 (SLC22A2) of Oryctolagus cuniculus (Rabbit).